Consider the following 188-residue polypeptide: ADP-ribosylation factor J (188 aa).

Residues 34-40, 75-79, and 134-137 contribute to the GTP site; these read DGAGKST, DVGGQ, and NKQD.

The protein belongs to the small GTPase superfamily. Arf family.

It localises to the golgi apparatus. GTP-binding protein that may be involved in protein trafficking. May modulate vesicle budding and uncoating within the Golgi apparatus. The chain is ADP-ribosylation factor J (arrJ) from Dictyostelium discoideum (Social amoeba).